A 65-amino-acid polypeptide reads, in one-letter code: MENTENVRSGRNQREYSKERQQEGGYKEVSKAAVRKEGDVKQDMGPSVSMTVVGEKVEFTQHFHF.

Residues 1 to 10 show a composition bias toward polar residues; that stretch reads MENTENVRSG. Residues 1–47 are disordered; sequence MENTENVRSGRNQREYSKERQQEGGYKEVSKAAVRKEGDVKQDMGPS. Over residues 12–42 the composition is skewed to basic and acidic residues; that stretch reads NQREYSKERQQEGGYKEVSKAAVRKEGDVKQ.

The protein belongs to the carmovirus/necrovirus/panicovirus movement protein p8 family.

In terms of biological role, cell-to-cell movement. The chain is Probable movement protein p8 from Tobacco necrosis virus (strain D) (TNV-D).